Here is a 440-residue protein sequence, read N- to C-terminus: MSRPKPIHNAQPEQVFIESLDTEGRGIARVEGKVLFVDGALPGERVWARRTQNHKSFDRAELLQVDKASSLRVSPPCPHFGVCGGCSLQHLEPAAQVAIKQRQLEDHLWRIGKVRPERVLPPIHGPSLGYRSKARLSVRTPKTRGAMVGFRERNSSYVVDMGQCLTLDPRVGQRILSLRTLIGQMQSPQDFPQIEVAATPDAVALVFRHMRPLAESDLQHLRAFGEQHDLQIWLQPRGPETLYPLWPEQPEPLHYDLPDYRLRLRFDPLVFTQVNQAANQVMVRRAMALLQPQPGEHILDLFCGLGNFTLPIARLGAQVLGIEGDARLVALAAENAAANGLADKARYAVADLTQARMEDFAPAGAIDKMLIDPPRSGAIEVLRSLTPGVRRLVYVSCNPATLARDAEYLVHERGYRLRAAGVVNMFPHTAHVESIALFER.

Residues 6–64 (PIHNAQPEQVFIESLDTEGRGIARVEGKVLFVDGALPGERVWARRTQNHKSFDRAELLQ) form the TRAM domain. 4 residues coordinate [4Fe-4S] cluster: cysteine 77, cysteine 83, cysteine 86, and cysteine 164. Residues glutamine 273, phenylalanine 302, asparagine 307, glutamate 323, aspartate 351, and aspartate 372 each contribute to the S-adenosyl-L-methionine site. Cysteine 397 (nucleophile) is an active-site residue.

Belongs to the class I-like SAM-binding methyltransferase superfamily. RNA M5U methyltransferase family. RlmD subfamily.

It carries out the reaction uridine(1939) in 23S rRNA + S-adenosyl-L-methionine = 5-methyluridine(1939) in 23S rRNA + S-adenosyl-L-homocysteine + H(+). Catalyzes the formation of 5-methyl-uridine at position 1939 (m5U1939) in 23S rRNA. This is 23S rRNA (uracil(1939)-C(5))-methyltransferase RlmD from Acidithiobacillus ferrooxidans (strain ATCC 23270 / DSM 14882 / CIP 104768 / NCIMB 8455) (Ferrobacillus ferrooxidans (strain ATCC 23270)).